The chain runs to 128 residues: Small ribosomal subunit protein eS8 (128 aa).

A disordered region spans residues 1 to 41; sequence MSYYQGNDSRKITGGQKGKNRDKRKYELGSPPTETKISDKD.

Belongs to the eukaryotic ribosomal protein eS8 family. In terms of assembly, part of the 30S ribosomal subunit.

The polypeptide is Small ribosomal subunit protein eS8 (Sulfolobus acidocaldarius (strain ATCC 33909 / DSM 639 / JCM 8929 / NBRC 15157 / NCIMB 11770)).